The primary structure comprises 630 residues: 1-deoxy-D-xylulose-5-phosphate synthase (630 aa).

Residues His-72 and 113–115 (GHS) contribute to the thiamine diphosphate site. Residue Asp-144 coordinates Mg(2+). Residues 145–146 (GA), Asn-173, Tyr-284, and Glu-367 contribute to the thiamine diphosphate site. Asn-173 is a binding site for Mg(2+).

It belongs to the transketolase family. DXPS subfamily. As to quaternary structure, homodimer. Requires Mg(2+) as cofactor. Thiamine diphosphate serves as cofactor.

It carries out the reaction D-glyceraldehyde 3-phosphate + pyruvate + H(+) = 1-deoxy-D-xylulose 5-phosphate + CO2. Its pathway is metabolic intermediate biosynthesis; 1-deoxy-D-xylulose 5-phosphate biosynthesis; 1-deoxy-D-xylulose 5-phosphate from D-glyceraldehyde 3-phosphate and pyruvate: step 1/1. Functionally, catalyzes the acyloin condensation reaction between C atoms 2 and 3 of pyruvate and glyceraldehyde 3-phosphate to yield 1-deoxy-D-xylulose-5-phosphate (DXP). The polypeptide is 1-deoxy-D-xylulose-5-phosphate synthase (Bacillus cereus (strain AH187)).